A 97-amino-acid polypeptide reads, in one-letter code: Putative septation protein SpoVG (97 aa).

Belongs to the SpoVG family.

In terms of biological role, essential for sporulation. Interferes with or is a negative regulator of the pathway leading to asymmetric septation. This is Putative septation protein SpoVG from Bacillus cytotoxicus (strain DSM 22905 / CIP 110041 / 391-98 / NVH 391-98).